Consider the following 348-residue polypeptide: Mamu class I histocompatibility antigen, alpha chain F (348 aa).

Residues 1 to 21 (MAPRTLLLVLSGALALTETWA) form the signal peptide. The segment at 22–113 (GSHSLRYFST…LLLRYNQSEA (92 aa)) is alpha-1. Residues 22 to 307 (GSHSLRYFST…ESSSQPTIPI (286 aa)) lie on the Extracellular side of the membrane. N109 carries N-linked (GlcNAc...) asparagine glycosylation. Residues 114–205 (GSHTLQGMNG…ENGKETLQRA (92 aa)) form an alpha-2 region. Disulfide bonds link C124-C187 and C226-C282. Residues 206–297 (DPPKAHVAHH…GLPQPLTLRW (92 aa)) are alpha-3. One can recognise an Ig-like C1-type domain in the interval 208 to 296 (PKAHVAHHPI…EGLPQPLTLR (89 aa)). The tract at residues 298–307 (ESSSQPTIPI) is connecting peptide. A helical transmembrane segment spans residues 308–331 (VGIVAGLAVLAVVVTGAVVAAVMW). The Cytoplasmic portion of the chain corresponds to 332–348 (RRKSSDRNRGSYSQPTM).

This sequence belongs to the MHC class I family. In terms of assembly, heterodimer of an alpha chain and a beta chain (beta-2-microglobulin).

It is found in the membrane. In terms of biological role, involved in the presentation of foreign antigens to the immune system. The chain is Mamu class I histocompatibility antigen, alpha chain F (Mamu-F) from Macaca mulatta (Rhesus macaque).